The following is a 98-amino-acid chain: DNA-binding protein Fis (98 aa).

Residues 74 to 93 (QTRAATMLGINRGTLRKKLK) constitute a DNA-binding region (H-T-H motif).

Belongs to the transcriptional regulatory Fis family. As to quaternary structure, homodimer.

Activates ribosomal RNA transcription. Plays a direct role in upstream activation of rRNA promoters. This is DNA-binding protein Fis from Haemophilus ducreyi (strain 35000HP / ATCC 700724).